A 230-amino-acid chain; its full sequence is Probable C4-dicarboxylate response regulator DctR (230 aa).

In terms of domain architecture, Response regulatory spans 8-124 (RVLLIEDDPM…RLKAALTQYE (117 aa)). Residue D59 is modified to 4-aspartylphosphate. A DNA-binding region (H-T-H motif) is located at residues 183–209 (EEIGRDVGLARVTVRRYLNYLESVGQV).

In terms of processing, phosphorylated by DctS.

The protein resides in the cytoplasm. Its function is as follows. Member of the two-component regulatory system DctS/DctR. Essential for expression of DctP. The sequence is that of Probable C4-dicarboxylate response regulator DctR (dctR) from Halalkalibacterium halodurans (strain ATCC BAA-125 / DSM 18197 / FERM 7344 / JCM 9153 / C-125) (Bacillus halodurans).